A 30-amino-acid polypeptide reads, in one-letter code: Chassatide C9 (30 aa).

Positions 1–30 form a cross-link, cyclopeptide (Gly-Asn); it reads GIPCGESCVFIPCVTTVIGCSCKDKVCYNN. Cystine bridges form between Cys-4–Cys-20, Cys-8–Cys-22, and Cys-13–Cys-27.

Post-translationally, this is a cyclic peptide.

In terms of biological role, probably participates in a plant defense mechanism. The polypeptide is Chassatide C9 (Chassalia chartacea (Chassalia curviflora)).